A 309-amino-acid polypeptide reads, in one-letter code: Cyclin-dependent kinase B1-1 (309 aa).

In terms of domain architecture, Protein kinase spans 4-301; that stretch reads YEKLEKVGEG…AKTALDHPYF (298 aa). Residues 10 to 18 and Lys-33 contribute to the ATP site; that span reads VGEGTYGKV. Position 15 is a phosphotyrosine (Tyr-15). Catalysis depends on Asp-142, which acts as the Proton acceptor. Thr-176 carries the post-translational modification Phosphothreonine; by CAK.

This sequence belongs to the protein kinase superfamily. CMGC Ser/Thr protein kinase family. CDC2/CDKX subfamily. In terms of assembly, interacts with CKS1. Interacts with CYCU3-1. Interacts with SIM, SMR1 and SMR2. Highly expressed in guard cells and stomatal precursor cells of cotyledons. Expressed in roots, stems, flowers and siliques.

It is found in the nucleus. It catalyses the reaction L-seryl-[protein] + ATP = O-phospho-L-seryl-[protein] + ADP + H(+). The catalysed reaction is L-threonyl-[protein] + ATP = O-phospho-L-threonyl-[protein] + ADP + H(+). The enzyme catalyses [DNA-directed RNA polymerase] + ATP = phospho-[DNA-directed RNA polymerase] + ADP + H(+). Its activity is regulated as follows. Phosphorylation at Thr-14 or Tyr-15 inactivates the enzyme, while phosphorylation at Thr-176 activates it. Functionally, may control G2/M (mitosis) phase progression. Plays a role in regulating seedling growth in darkness via regulation of hypocotyl cell elongation and cotyledon cell development. Plays a role in stomatal development. Required to suppress endoreduplication. Together with CDKB1-2, promotes both the last division in the stomatal cell lineage as well as the number of stomata. In collaboration with MYB124 and MYB88, restrict the G1/S transition and chloroplast and nuclear number during stomatal formation, and normally maintain fate and developmental progression throughout the stomatal cell lineage. This is Cyclin-dependent kinase B1-1 (CDKB1-1) from Arabidopsis thaliana (Mouse-ear cress).